Consider the following 371-residue polypeptide: DNA replication and repair protein RecF (371 aa).

30–37 (GKNGQGKT) is an ATP binding site.

It belongs to the RecF family.

The protein resides in the cytoplasm. Functionally, the RecF protein is involved in DNA metabolism; it is required for DNA replication and normal SOS inducibility. RecF binds preferentially to single-stranded, linear DNA. It also seems to bind ATP. The chain is DNA replication and repair protein RecF from Clostridioides difficile (strain 630) (Peptoclostridium difficile).